The chain runs to 257 residues: Glutamate racemase (257 aa).

Substrate-binding positions include aspartate 12–serine 13 and tyrosine 44–glycine 45. The active-site Proton donor/acceptor is cysteine 75. Asparagine 76–threonine 77 serves as a coordination point for substrate. The Proton donor/acceptor role is filled by cysteine 176. A substrate-binding site is contributed by threonine 177 to histidine 178.

Belongs to the aspartate/glutamate racemases family.

The catalysed reaction is L-glutamate = D-glutamate. The protein operates within cell wall biogenesis; peptidoglycan biosynthesis. In terms of biological role, provides the (R)-glutamate required for cell wall biosynthesis. This Thermus thermophilus (strain ATCC BAA-163 / DSM 7039 / HB27) protein is Glutamate racemase.